Consider the following 185-residue polypeptide: TATA-box-binding protein (185 aa).

Tandem repeats lie at residues 8–84 and 99–175.

It belongs to the TBP family.

Functionally, general factor that plays a role in the activation of archaeal genes transcribed by RNA polymerase. Binds specifically to the TATA box promoter element which lies close to the position of transcription initiation. This is TATA-box-binding protein from Thermococcus sibiricus (strain DSM 12597 / MM 739).